Here is a 239-residue protein sequence, read N- to C-terminus: Orotidine 5'-phosphate decarboxylase (239 aa).

Residues Asp-11, Lys-33, 60–69 (DLKLHDIPTT), Thr-123, Arg-185, Gln-194, Gly-214, and Arg-215 contribute to the substrate site. The active-site Proton donor is Lys-62.

Belongs to the OMP decarboxylase family. Type 1 subfamily. As to quaternary structure, homodimer.

The catalysed reaction is orotidine 5'-phosphate + H(+) = UMP + CO2. It participates in pyrimidine metabolism; UMP biosynthesis via de novo pathway; UMP from orotate: step 2/2. Catalyzes the decarboxylation of orotidine 5'-monophosphate (OMP) to uridine 5'-monophosphate (UMP). This chain is Orotidine 5'-phosphate decarboxylase (pyrF), found in Bacillus subtilis (strain 168).